The sequence spans 87 residues: Small ribosomal subunit protein bS16 (87 aa).

It belongs to the bacterial ribosomal protein bS16 family.

This chain is Small ribosomal subunit protein bS16, found in Desulfatibacillum aliphaticivorans.